Reading from the N-terminus, the 799-residue chain is Disintegrin and metalloproteinase domain-containing protein B (799 aa).

A signal peptide spans 1-23 (MKAFSCLLSVIATAASLFQHVDA). Residues 24–707 (RSHARDKLNN…VSDWVSRHKP (684 aa)) lie on the Extracellular side of the membrane. N-linked (GlcNAc...) asparagine glycans are attached at residues Asn-33, Asn-227, Asn-228, Asn-314, and Asn-408. A Peptidase M12B domain is found at 272–511 (KVALIGVVAD…RTILTSCLTT (240 aa)). 3 disulfide bridges follow: Cys-396–Cys-496, Cys-449–Cys-460, and Cys-581–Cys-601. Residue His-432 participates in Zn(2+) binding. Residue Glu-433 is part of the active site. Residues His-436 and His-442 each coordinate Zn(2+). Positions 520-609 (GQQCGNGIVE…DCPHDIHSKD (90 aa)) constitute a Disintegrin domain. A helical membrane pass occupies residues 708–728 (IVIGVAVGAGCLLLLAIASCI). Over 729–799 (CGRSRRQRPR…PGHLPSTRYA (71 aa)) the chain is Cytoplasmic. A disordered region spans residues 753–799 (VYNGWNGAPPNAQQSSPGGHPPYNNIPPPINAPPPAYPGHLPSTRYA). Positions 776–789 (NNIPPPINAPPPAY) are enriched in pro residues.

Zn(2+) is required as a cofactor.

The protein resides in the membrane. Probable zinc protease. The sequence is that of Disintegrin and metalloproteinase domain-containing protein B (ADM-B) from Arthroderma benhamiae (strain ATCC MYA-4681 / CBS 112371) (Trichophyton mentagrophytes).